The primary structure comprises 262 residues: Acyl-coenzyme A diphosphatase FITM2 (262 aa).

The Cytoplasmic portion of the chain corresponds to 1-23 (MEHLERCEWLLRGTLVRAAVRRY). The chain crosses the membrane as a helical span at residues 24 to 44 (LPWALVASMLAGSLLKELSPL). The Lumenal segment spans residues 45–57 (PESYLSNKRNVLN). The helical transmembrane segment at 58–78 (VYFVKVAWAWTFCLLLPFIAL) threads the bilayer. The Cytoplasmic segment spans residues 79–93 (TNYHLTGKAGLVLRR). Residues 94 to 114 (LSTLLVGTAIWYICTSIFSNI) form a helical membrane-spanning segment. Residues 115–145 (EHYTGSCYQSPALEGVRKEHQSKQQCHQEGG) are Lumenal-facing. A helical membrane pass occupies residues 146–166 (FWHGFDISGHSFLLTFCALMI). Histidine 155 is a catalytic residue. At 167 to 190 (VEEMSVLHEVKTDRSHCLHTAITT) the chain is on the cytoplasmic side. Residues 191–211 (LVVALGILTFIWVLMFLCTAV) form a helical membrane-spanning segment. The Lumenal segment spans residues 212-218 (YFHNLSQ). Histidine 214 is an active-site residue. A helical membrane pass occupies residues 219-239 (KVFGTLFGLLSWYGTYGFWYP). At 240–262 (KAFSPGLPPQSCSLNLKQDSYKK) the chain is on the cytoplasmic side.

The protein belongs to the FIT family. FIT2 subfamily. As to expression, widely expressed.

The protein resides in the endoplasmic reticulum membrane. It carries out the reaction an acyl-CoA + H2O = an acyl-4'-phosphopantetheine + adenosine 3',5'-bisphosphate + 2 H(+). It catalyses the reaction (9Z)-octadecenoyl-CoA + H2O = S-(9Z-octadecenoyl)-4'-phosphopantetheine + adenosine 3',5'-bisphosphate + 2 H(+). The catalysed reaction is (5Z,8Z,11Z,14Z)-eicosatetraenoyl-CoA + H2O = S-(5Z,8Z,11Z,14Z-eicosatetraenoyl)-4'-phosphopantetheine + adenosine 3',5'-bisphosphate + 2 H(+). The enzyme catalyses hexadecanoyl-CoA + H2O = S-hexadecanoyl-4'-phosphopantetheine + adenosine 3',5'-bisphosphate + 2 H(+). Fatty acyl-coenzyme A (CoA) diphosphatase that hydrolyzes fatty acyl-CoA to yield acyl-4'-phosphopantetheine and adenosine 3',5'-bisphosphate. Preferentially hydrolyzes unsaturated long-chain acyl-CoA substrates such as oleoyl-CoA/(9Z)-octadecenoyl-CoA and arachidonoyl-CoA/(5Z,8Z,11Z,14Z)-eicosatetraenoyl-CoA in the endoplasmic reticulum (ER) lumen. This catalytic activity is required for maintaining ER structure and for lipid droplets (LDs) biogenesis, which are lipid storage organelles involved in maintaining lipid and energy homeostasis. Directly binds to diacylglycerol (DAGs) and triacylglycerol, which is also important for LD biogenesis. May support directional budding of nacent LDs from the ER into the cytosol by reducing DAG levels at sites of LD formation. Plays a role in the regulation of cell morphology and cytoskeletal organization. This Homo sapiens (Human) protein is Acyl-coenzyme A diphosphatase FITM2.